The following is a 120-amino-acid chain: Large ribosomal subunit protein uL22 (120 aa).

It belongs to the universal ribosomal protein uL22 family. Part of the 50S ribosomal subunit.

Functionally, this protein binds specifically to 23S rRNA; its binding is stimulated by other ribosomal proteins, e.g. L4, L17, and L20. It is important during the early stages of 50S assembly. It makes multiple contacts with different domains of the 23S rRNA in the assembled 50S subunit and ribosome. The globular domain of the protein is located near the polypeptide exit tunnel on the outside of the subunit, while an extended beta-hairpin is found that lines the wall of the exit tunnel in the center of the 70S ribosome. The polypeptide is Large ribosomal subunit protein uL22 (Borreliella afzelii (strain PKo) (Borrelia afzelii)).